A 99-amino-acid polypeptide reads, in one-letter code: Acylphosphatase-1 (99 aa).

Alanine 2 is modified (N-acetylalanine). The Acylphosphatase-like domain maps to 9 to 99; that stretch reads SVDYEVSGRV…LEHTDFQIRK (91 aa). Active-site residues include arginine 24 and asparagine 42.

The protein belongs to the acylphosphatase family. In terms of tissue distribution, organ-common type isozyme is found in many different tissues.

It carries out the reaction an acyl phosphate + H2O = a carboxylate + phosphate + H(+). This Gallus gallus (Chicken) protein is Acylphosphatase-1 (ACYP1).